The chain runs to 192 residues: Pyridoxal 5'-phosphate synthase subunit PdxT (192 aa).

46–48 (GES) serves as a coordination point for L-glutamine. The active-site Nucleophile is the cysteine 77. L-glutamine contacts are provided by residues arginine 103 and 131–132 (IR). Residues histidine 167 and glutamate 169 each act as charge relay system in the active site.

It belongs to the glutaminase PdxT/SNO family. In terms of assembly, in the presence of PdxS, forms a dodecamer of heterodimers. Only shows activity in the heterodimer.

The catalysed reaction is aldehydo-D-ribose 5-phosphate + D-glyceraldehyde 3-phosphate + L-glutamine = pyridoxal 5'-phosphate + L-glutamate + phosphate + 3 H2O + H(+). It catalyses the reaction L-glutamine + H2O = L-glutamate + NH4(+). It participates in cofactor biosynthesis; pyridoxal 5'-phosphate biosynthesis. Catalyzes the hydrolysis of glutamine to glutamate and ammonia as part of the biosynthesis of pyridoxal 5'-phosphate. The resulting ammonia molecule is channeled to the active site of PdxS. This Exiguobacterium sibiricum (strain DSM 17290 / CCUG 55495 / CIP 109462 / JCM 13490 / 255-15) protein is Pyridoxal 5'-phosphate synthase subunit PdxT.